A 295-amino-acid polypeptide reads, in one-letter code: Undecaprenyl-diphosphatase (295 aa).

6 consecutive transmembrane segments (helical) span residues 39–59, 97–117, 121–141, 198–218, 232–252, and 263–283; these read PGAA…LLYF, WYII…QHAI, LRNL…LWIV, AFLM…VKAI, ATIA…IGFL, and FAIY…CGVL.

Belongs to the UppP family.

The protein localises to the cell membrane. The catalysed reaction is di-trans,octa-cis-undecaprenyl diphosphate + H2O = di-trans,octa-cis-undecaprenyl phosphate + phosphate + H(+). Functionally, catalyzes the dephosphorylation of undecaprenyl diphosphate (UPP). Confers resistance to bacitracin. The chain is Undecaprenyl-diphosphatase from Bifidobacterium animalis subsp. lactis (strain AD011).